Reading from the N-terminus, the 173-residue chain is ATP synthase subunit b (173 aa).

Residues Ile-19–Pro-39 traverse the membrane as a helical segment.

The protein belongs to the ATPase B chain family. In terms of assembly, F-type ATPases have 2 components, F(1) - the catalytic core - and F(0) - the membrane proton channel. F(1) has five subunits: alpha(3), beta(3), gamma(1), delta(1), epsilon(1). F(0) has three main subunits: a(1), b(2) and c(10-14). The alpha and beta chains form an alternating ring which encloses part of the gamma chain. F(1) is attached to F(0) by a central stalk formed by the gamma and epsilon chains, while a peripheral stalk is formed by the delta and b chains.

The protein localises to the cell membrane. Functionally, f(1)F(0) ATP synthase produces ATP from ADP in the presence of a proton or sodium gradient. F-type ATPases consist of two structural domains, F(1) containing the extramembraneous catalytic core and F(0) containing the membrane proton channel, linked together by a central stalk and a peripheral stalk. During catalysis, ATP synthesis in the catalytic domain of F(1) is coupled via a rotary mechanism of the central stalk subunits to proton translocation. Its function is as follows. Component of the F(0) channel, it forms part of the peripheral stalk, linking F(1) to F(0). The chain is ATP synthase subunit b from Bifidobacterium longum (strain NCC 2705).